Consider the following 224-residue polypeptide: LexA repressor (224 aa).

The segment at residues 31 to 51 (RAEIANTLGFKSANAAEEHLQ) is a DNA-binding region (H-T-H motif). Residues Ser142 and Lys179 each act as for autocatalytic cleavage activity in the active site.

Belongs to the peptidase S24 family. Homodimer.

It catalyses the reaction Hydrolysis of Ala-|-Gly bond in repressor LexA.. Represses a number of genes involved in the response to DNA damage (SOS response), including recA and lexA. In the presence of single-stranded DNA, RecA interacts with LexA causing an autocatalytic cleavage which disrupts the DNA-binding part of LexA, leading to derepression of the SOS regulon and eventually DNA repair. This chain is LexA repressor, found in Delftia acidovorans (strain DSM 14801 / SPH-1).